Reading from the N-terminus, the 372-residue chain is Phospho-N-acetylmuramoyl-pentapeptide-transferase (372 aa).

10 consecutive transmembrane segments (helical) span residues 2–22, 71–91, 98–118, 134–154, 176–196, 211–231, 251–271, 275–295, 300–320, and 349–369; these read LVWL…VSSL, TPTM…LLWA, VWIL…DDWL, YFWL…IATL, MIPF…YFVI, GLAI…AYVS, VIIV…FNAH, VFMG…IAVM, IAFA…MLQV, and QVVA…LMTL.

This sequence belongs to the glycosyltransferase 4 family. MraY subfamily. Mg(2+) serves as cofactor.

It localises to the cell inner membrane. The catalysed reaction is UDP-N-acetyl-alpha-D-muramoyl-L-alanyl-gamma-D-glutamyl-meso-2,6-diaminopimeloyl-D-alanyl-D-alanine + di-trans,octa-cis-undecaprenyl phosphate = di-trans,octa-cis-undecaprenyl diphospho-N-acetyl-alpha-D-muramoyl-L-alanyl-D-glutamyl-meso-2,6-diaminopimeloyl-D-alanyl-D-alanine + UMP. It functions in the pathway cell wall biogenesis; peptidoglycan biosynthesis. Its function is as follows. Catalyzes the initial step of the lipid cycle reactions in the biosynthesis of the cell wall peptidoglycan: transfers peptidoglycan precursor phospho-MurNAc-pentapeptide from UDP-MurNAc-pentapeptide onto the lipid carrier undecaprenyl phosphate, yielding undecaprenyl-pyrophosphoryl-MurNAc-pentapeptide, known as lipid I. The sequence is that of Phospho-N-acetylmuramoyl-pentapeptide-transferase from Psychrobacter cryohalolentis (strain ATCC BAA-1226 / DSM 17306 / VKM B-2378 / K5).